The chain runs to 122 residues: Large ribosomal subunit protein uL14 (122 aa).

Belongs to the universal ribosomal protein uL14 family. Part of the 50S ribosomal subunit. Forms a cluster with proteins L3 and L19. In the 70S ribosome, L14 and L19 interact and together make contacts with the 16S rRNA in bridges B5 and B8.

Binds to 23S rRNA. Forms part of two intersubunit bridges in the 70S ribosome. The chain is Large ribosomal subunit protein uL14 from Alcanivorax borkumensis (strain ATCC 700651 / DSM 11573 / NCIMB 13689 / SK2).